The following is a 124-amino-acid chain: Insulin-like growth factor 1 (124 aa).

The propeptide occupies 1–19; sequence IHFFYLGLCLLTLTSSAAA. The interval 20–48 is b; it reads GPETLCGAELVDALQFVCGDRGFYFSKPT. Cystine bridges form between C25/C67, C37/C80, and C66/C71. The segment at 49–60 is c; the sequence is GYGSSSRRLHHK. Residues 61–81 are a; the sequence is GIVDECCFQSCDLRRLEMYCA. A d region spans residues 82 to 89; it reads PIKPPKSA. The interval 86–124 is disordered; that stretch reads PKSARSVRAQRHTDMPKAQKEVHLKNTSRGNTGNRNYRM. A propeptide spans 90–124 (e peptide); sequence RSVRAQRHTDMPKAQKEVHLKNTSRGNTGNRNYRM. Over residues 96-109 the composition is skewed to basic and acidic residues; the sequence is RHTDMPKAQKEVHL. The span at 110–124 shows a compositional bias: polar residues; sequence KNTSRGNTGNRNYRM.

It belongs to the insulin family.

The protein localises to the secreted. Functionally, the insulin-like growth factors, isolated from plasma, are structurally and functionally related to insulin but have a much higher growth-promoting activity. Acts as a ligand for IGF1R. Binds to the alpha subunit of IGF1R, leading to the activation of the intrinsic tyrosine kinase activity which autophosphorylates tyrosine residues in the beta subunit thus initiatiating a cascade of down-stream signaling events leading to activation of the PI3K-AKT/PKB and the Ras-MAPK pathways. Binds to integrins. Its binding to integrins and subsequent ternary complex formation with integrins and IGFR1 are essential for IGF1 signaling. The polypeptide is Insulin-like growth factor 1 (Coturnix japonica (Japanese quail)).